Here is a 262-residue protein sequence, read N- to C-terminus: Nurim (262 aa).

The Nuclear portion of the chain corresponds to 1 to 4; the sequence is MAPA. The chain crosses the membrane as a helical span at residues 5 to 28; the sequence is LLLVPAALASFILAFGTGVEFVRF. Topologically, residues 29 to 58 are perinuclear space; sequence TSLRPLLGGIPESGGPDARHGWLAALQDRS. A helical membrane pass occupies residues 59–80; sequence ILASLAWDLCLLLLFVVQHSLM. Residues 81-97 lie on the Nuclear side of the membrane; sequence ATEAVKAWTSRYFGVLQ. Residues 98–114 form a helical membrane-spanning segment; that stretch reads RSLYVACTALALQLVMR. The Perinuclear space portion of the chain corresponds to 115–133; sequence YWETTPRGPVLWEARAEPW. The chain crosses the membrane as a helical span at residues 134–164; that stretch reads ATWVPLLCFVLHVVSWLLIFSILLVFDYAEL. The Nuclear segment spans residues 165–191; the sequence is MGLKQVYYHVLGLGEPLSLKSPRALRL. The chain crosses the membrane as a helical span at residues 192–210; it reads FSHLRHPVCVELLTVLWVV. Residues 211 to 216 lie on the Perinuclear space side of the membrane; the sequence is PTLGTD. A helical transmembrane segment spans residues 217–234; that stretch reads RLLLALLFTLYLGLAHGL. The Nuclear portion of the chain corresponds to 235 to 262; the sequence is DQQDLRYLRSQLQRKLHLLSRPQDGEAE.

The protein belongs to the nurim family.

Its subcellular location is the nucleus inner membrane. The protein is Nurim (Nrm) of Mus musculus (Mouse).